Consider the following 37-residue polypeptide: Large ribosomal subunit protein bL36c (37 aa).

The protein belongs to the bacterial ribosomal protein bL36 family.

It localises to the plastid. Its subcellular location is the chloroplast. This Welwitschia mirabilis (Tree tumbo) protein is Large ribosomal subunit protein bL36c.